The sequence spans 141 residues: Photosystem I reaction center subunit IV A, chloroplastic (141 aa).

A chloroplast-targeting transit peptide spans 1 to 49 (MASCNMASAASNFLVATPNVASNTNTSRTTMLFFSSKNYGSTAPRLVVR). Over residues 57–73 (PAAAATAEPAEAPVKAA) the composition is skewed to low complexity. The tract at residues 57 to 83 (PAAAATAEPAEAPVKAAKPPPIGPKRG) is disordered.

Belongs to the PsaE family. Post-translationally, 2 isoforms exists (ratio 1:1). With or without the N-terminal alanine.

The protein resides in the plastid. It is found in the chloroplast thylakoid membrane. Functionally, stabilizes the interaction between PsaC and the PSI core, assists the docking of the ferredoxin to PSI and interacts with ferredoxin-NADP oxidoreductase. This chain is Photosystem I reaction center subunit IV A, chloroplastic (PSAEA), found in Nicotiana sylvestris (Wood tobacco).